We begin with the raw amino-acid sequence, 153 residues long: Cytochrome c-type biogenesis protein CcmE (153 aa).

The Cytoplasmic portion of the chain corresponds to Met-1–Arg-8. Residues Leu-9–Ala-29 traverse the membrane as a helical; Signal-anchor for type II membrane protein segment. Over Leu-30–Arg-153 the chain is Extracellular. Positions 123 and 127 each coordinate heme.

Belongs to the CcmE/CycJ family.

It localises to the cell membrane. In terms of biological role, heme chaperone required for the biogenesis of c-type cytochromes. Transiently binds heme delivered by CcmC and transfers the heme to apo-cytochromes in a process facilitated by CcmF and CcmH. The protein is Cytochrome c-type biogenesis protein CcmE of Stenotrophomonas maltophilia (strain K279a).